The sequence spans 705 residues: Elongation factor G (705 aa).

In terms of domain architecture, tr-type G spans 6 to 282; that stretch reads NKVRNIGIMA…AVVDFLPSPL (277 aa). GTP is bound by residues 15 to 22, 79 to 83, and 133 to 136; these read AHIDAGKT, DTPGH, and NKMD.

The protein belongs to the TRAFAC class translation factor GTPase superfamily. Classic translation factor GTPase family. EF-G/EF-2 subfamily.

The protein resides in the cytoplasm. Its function is as follows. Catalyzes the GTP-dependent ribosomal translocation step during translation elongation. During this step, the ribosome changes from the pre-translocational (PRE) to the post-translocational (POST) state as the newly formed A-site-bound peptidyl-tRNA and P-site-bound deacylated tRNA move to the P and E sites, respectively. Catalyzes the coordinated movement of the two tRNA molecules, the mRNA and conformational changes in the ribosome. This is Elongation factor G from Corynebacterium glutamicum (strain ATCC 13032 / DSM 20300 / JCM 1318 / BCRC 11384 / CCUG 27702 / LMG 3730 / NBRC 12168 / NCIMB 10025 / NRRL B-2784 / 534).